The sequence spans 205 residues: ATP synthase subunit b (205 aa).

A helical transmembrane segment spans residues 45-65 (LGMTATAWVSLAMVIVILLLL).

The protein belongs to the ATPase B chain family. As to quaternary structure, F-type ATPases have 2 components, F(1) - the catalytic core - and F(0) - the membrane proton channel. F(1) has five subunits: alpha(3), beta(3), gamma(1), delta(1), epsilon(1). F(0) has three main subunits: a(1), b(2) and c(10-14). The alpha and beta chains form an alternating ring which encloses part of the gamma chain. F(1) is attached to F(0) by a central stalk formed by the gamma and epsilon chains, while a peripheral stalk is formed by the delta and b chains.

The protein localises to the cell inner membrane. In terms of biological role, f(1)F(0) ATP synthase produces ATP from ADP in the presence of a proton or sodium gradient. F-type ATPases consist of two structural domains, F(1) containing the extramembraneous catalytic core and F(0) containing the membrane proton channel, linked together by a central stalk and a peripheral stalk. During catalysis, ATP synthesis in the catalytic domain of F(1) is coupled via a rotary mechanism of the central stalk subunits to proton translocation. Component of the F(0) channel, it forms part of the peripheral stalk, linking F(1) to F(0). The chain is ATP synthase subunit b from Rhizorhabdus wittichii (strain DSM 6014 / CCUG 31198 / JCM 15750 / NBRC 105917 / EY 4224 / RW1) (Sphingomonas wittichii).